The following is a 299-amino-acid chain: Protein NSG2 (299 aa).

The Cytoplasmic segment spans residues 1–108; it reads MANRGEPDPK…PSRTRQTRQN (108 aa). Serine 90 carries the post-translational modification Phosphoserine. Residues 109 to 129 traverse the membrane as a helical segment; that stretch reads ILHYLQAVLILSLSGFAYHEL. At 130–161 the chain is on the lumenal side; that stretch reads SRNLHDNHLLHPDFASRPLLLGVKLCNWLSNG. The chain crosses the membrane as a helical span at residues 162–182; the sequence is VLPNWLGYGVEGLLFGSVVPI. Residues 183–237 are Cytoplasmic-facing; that stretch reads LDNIFQTEVVKSSVHHDSLTSVIRSINAMLGVTFGIRKIQWNSSLQAAGAWGLLN. A helical membrane pass occupies residues 238-258; sequence IILWLFFDGSISMLMSCICIG. The Lumenal segment spans residues 259 to 268; sequence VGCCISCYKD. The helical transmembrane segment at 269–289 threads the bilayer; that stretch reads IIDGSQFLYFMDFYFLGSLMF. The Cytoplasmic segment spans residues 290-299; it reads GKLGRYLYSH.

The protein belongs to the INSIG family.

Its subcellular location is the endoplasmic reticulum membrane. In terms of biological role, stabilizes the HMG-CoA reductase HMG2 by preventing its HRD1-dependent degradation. Binds directly to the sterol-sensing domain (SSD)-containing transmembrane region of HMG2, promoting its folding to protect it from degradation. The sequence is that of Protein NSG2 (NSG2) from Saccharomyces cerevisiae (strain ATCC 204508 / S288c) (Baker's yeast).